Reading from the N-terminus, the 106-residue chain is N(4)-acetylcytidine amidohydrolase (106 aa).

Residues 9–105 enclose the ASCH domain; sequence TFFEFLTPLI…ELYVIEYELI (97 aa). K23 acts as the Proton acceptor in catalysis. The active-site Nucleophile is the T26. E76 functions as the Proton donor in the catalytic mechanism.

The protein belongs to the N(4)-acetylcytidine amidohydrolase family.

It catalyses the reaction N(4)-acetylcytidine + H2O = cytidine + acetate + H(+). The enzyme catalyses N(4)-acetyl-2'-deoxycytidine + H2O = 2'-deoxycytidine + acetate + H(+). The catalysed reaction is N(4)-acetylcytosine + H2O = cytosine + acetate + H(+). Functionally, catalyzes the hydrolysis of N(4)-acetylcytidine (ac4C). The polypeptide is N(4)-acetylcytidine amidohydrolase (Vibrio campbellii (strain ATCC BAA-1116)).